Consider the following 492-residue polypeptide: Metal cation symporter ZIP14 (492 aa).

The N-terminal stretch at 1-30 (MKLLLLHPAFQSCLLLTLLGLWRTTPEAHA) is a signal peptide. The Extracellular segment spans residues 31-157 (SSLGAPAISA…PSAVEVWGYG (127 aa)). N-linked (GlcNAc...) asparagine glycosylation is found at Asn-77, Asn-87, and Asn-102. Residues 158 to 178 (LLCVTVISLCSLLGASVVPFM) form a helical membrane-spanning segment. Topologically, residues 179–186 (KKTFYKRL) are cytoplasmic. A helical transmembrane segment spans residues 187-207 (LLYFIALAIGTLYSNALFQLI). Residues 208–224 (PEAFGFNPLEDYYVSKS) are Extracellular-facing. The chain crosses the membrane as a helical span at residues 225–245 (AVVFGGFYLFFFTEKILKILL). Topologically, residues 246–397 (KQKNEHHHGH…LLNAGMSIQQ (152 aa)) are cytoplasmic. An HHHGHXHX-motif motif is present at residues 251 to 258 (HHHGHSHY). Positions 376-381 (EEFPHE) match the XEXPHE-motif motif. The helical transmembrane segment at 398–418 (ALFFNFLSACCCYLGLAFGIL) threads the bilayer. At 419–424 (AGSHFS) the chain is on the extracellular side. Residues 425–445 (ANWIFALAGGMFLYISLADMF) traverse the membrane as a helical segment. Topologically, residues 446 to 460 (PEMNEVCQEDERKGS) are cytoplasmic. The helical transmembrane segment at 461-481 (ILIPFIIQNLGLLTGFTIMVV) threads the bilayer. Residues 482–492 (LTMYSGQIQIG) are Extracellular-facing.

Belongs to the ZIP transporter (TC 2.A.5) family. Homotrimer. Post-translationally, ubiquitinated. Ubiquitination occurs upon iron depletion. The ubiquitinated form undergoes proteasomal degradation. In terms of processing, N-glycosylated. N-glycosylation at Asn-102 is required for iron-regulated extraction of the transporter from membranes and subsequent proteasomal degradation. As to expression, ubiquitously expressed, with higher expression in liver, pancreas, fetal liver, thyroid gland, left and right ventricle, right atrium and fetal heart. Weakly expressed in spleen, thymus, and peripheral blood leukocytes. Expressed in liver and in brain by large neurons in the globus pallidus, the insular cortex and the dentate nucleus and to a lower extent in the putamen and the caudate nucleus (at protein level). Expressed in osteoblasts and giant osteoclast-like cells, but not in osteocytes found osteoblastoma and giant cell tumors (at protein level). Expressed by microvascular capillary endothelial cells that constitute the blood-brain barrier (at protein level). Expressed by macrophages. In terms of tissue distribution, widely expressed but not detected in brain, heart, skeletal muscle, placenta and fetal skin.

The protein localises to the cell membrane. Its subcellular location is the apical cell membrane. It localises to the basolateral cell membrane. The protein resides in the early endosome membrane. It is found in the late endosome membrane. The protein localises to the lysosome membrane. The enzyme catalyses Zn(2+)(out) + 2 hydrogencarbonate(out) = Zn(2+)(in) + 2 hydrogencarbonate(in). It catalyses the reaction Mn(2+)(out) + 2 hydrogencarbonate(out) = Mn(2+)(in) + 2 hydrogencarbonate(in). It carries out the reaction Fe(2+)(out) + 2 hydrogencarbonate(out) = Fe(2+)(in) + 2 hydrogencarbonate(in). The catalysed reaction is Cd(2+)(out) + 2 hydrogencarbonate(out) = Cd(2+)(in) + 2 hydrogencarbonate(in). In terms of biological role, electroneutral transporter of the plasma membrane mediating the cellular uptake of the divalent metal cations zinc, manganese and iron that are important for tissue homeostasis, metabolism, development and immunity. Functions as an energy-dependent symporter, transporting through the membranes an electroneutral complex composed of a divalent metal cation and two bicarbonate anions. Beside these endogenous cellular substrates, can also import cadmium a non-essential metal which is cytotoxic and carcinogenic. Controls the cellular uptake by the intestinal epithelium of systemic zinc, which is in turn required to maintain tight junctions and the intestinal permeability. Modifies the activity of zinc-dependent phosphodiesterases, thereby indirectly regulating G protein-coupled receptor signaling pathways important for gluconeogenesis and chondrocyte differentiation. Regulates insulin receptor signaling, glucose uptake, glycogen synthesis and gluconeogenesis in hepatocytes through the zinc-dependent intracellular catabolism of insulin. Through zinc cellular uptake also plays a role in the adaptation of cells to endoplasmic reticulum stress. Major manganese transporter of the basolateral membrane of intestinal epithelial cells, it plays a central role in manganese systemic homeostasis through intestinal manganese uptake. Also involved in manganese extracellular uptake by cells of the blood-brain barrier. May also play a role in manganese and zinc homeostasis participating in their elimination from the blood through the hepatobiliary excretion. Also functions in the extracellular uptake of free iron. May also function intracellularly and mediate the transport from endosomes to cytosol of iron endocytosed by transferrin. Plays a role in innate immunity by regulating the expression of cytokines by activated macrophages. This Homo sapiens (Human) protein is Metal cation symporter ZIP14.